Consider the following 158-residue polypeptide: SsrA-binding protein (158 aa).

This sequence belongs to the SmpB family.

The protein resides in the cytoplasm. Required for rescue of stalled ribosomes mediated by trans-translation. Binds to transfer-messenger RNA (tmRNA), required for stable association of tmRNA with ribosomes. tmRNA and SmpB together mimic tRNA shape, replacing the anticodon stem-loop with SmpB. tmRNA is encoded by the ssrA gene; the 2 termini fold to resemble tRNA(Ala) and it encodes a 'tag peptide', a short internal open reading frame. During trans-translation Ala-aminoacylated tmRNA acts like a tRNA, entering the A-site of stalled ribosomes, displacing the stalled mRNA. The ribosome then switches to translate the ORF on the tmRNA; the nascent peptide is terminated with the 'tag peptide' encoded by the tmRNA and targeted for degradation. The ribosome is freed to recommence translation, which seems to be the essential function of trans-translation. The sequence is that of SsrA-binding protein from Bifidobacterium longum (strain DJO10A).